The primary structure comprises 276 residues: NADPH-dependent 7-cyano-7-deazaguanine reductase (276 aa).

80-82 (VES) provides a ligand contact to substrate. Residue 82 to 83 (SK) coordinates NADPH. Catalysis depends on Cys183, which acts as the Thioimide intermediate. Asp190 (proton donor) is an active-site residue. Residue 222–223 (HE) coordinates substrate. 251–252 (RG) is an NADPH binding site.

This sequence belongs to the GTP cyclohydrolase I family. QueF type 2 subfamily. In terms of assembly, homodimer.

Its subcellular location is the cytoplasm. It carries out the reaction 7-aminomethyl-7-carbaguanine + 2 NADP(+) = 7-cyano-7-deazaguanine + 2 NADPH + 3 H(+). The protein operates within tRNA modification; tRNA-queuosine biosynthesis. Catalyzes the NADPH-dependent reduction of 7-cyano-7-deazaguanine (preQ0) to 7-aminomethyl-7-deazaguanine (preQ1). This chain is NADPH-dependent 7-cyano-7-deazaguanine reductase, found in Burkholderia orbicola (strain MC0-3).